The chain runs to 1024 residues: Multidrug resistance protein MdtC (1024 aa).

12 helical membrane-spanning segments follow: residues 12–32 (VATT…FSLL), 333–353 (EVER…FIFL), 360–380 (LIPA…MYLC), 387–407 (LSLM…IVVL), 435–455 (VLSM…MAGL), 469–489 (VAIG…CAWL), 528–548 (WVMV…ISIP), 853–873 (LWLI…LYES), 875–895 (VHPL…LLAL), 897–917 (LFDA…IGIV), 953–973 (PIIM…LSSG), and 984–1004 (ITIV…TPVI).

This sequence belongs to the resistance-nodulation-cell division (RND) (TC 2.A.6) family. MdtC subfamily. In terms of assembly, part of a tripartite efflux system composed of MdtA, MdtB and MdtC. MdtC forms a heteromultimer with MdtB.

The protein localises to the cell inner membrane. The sequence is that of Multidrug resistance protein MdtC from Yersinia pestis bv. Antiqua (strain Antiqua).